The primary structure comprises 314 residues: Protoheme IX farnesyltransferase (314 aa).

The next 8 membrane-spanning stretches (helical) occupy residues 31–51 (VMSL…GHFH), 52–72 (PVLA…SGAL), 119–139 (ILVN…YVVI), 152–172 (IVIG…AVTG), 179–199 (LLLF…LALF), 225–245 (ILLY…LGYF), 247–267 (AVYG…AINV), and 284–304 (FAFS…EVVF).

It belongs to the UbiA prenyltransferase family. Protoheme IX farnesyltransferase subfamily.

It localises to the cell inner membrane. It catalyses the reaction heme b + (2E,6E)-farnesyl diphosphate + H2O = Fe(II)-heme o + diphosphate. It functions in the pathway porphyrin-containing compound metabolism; heme O biosynthesis; heme O from protoheme: step 1/1. Converts heme B (protoheme IX) to heme O by substitution of the vinyl group on carbon 2 of heme B porphyrin ring with a hydroxyethyl farnesyl side group. The sequence is that of Protoheme IX farnesyltransferase from Bradyrhizobium diazoefficiens (strain JCM 10833 / BCRC 13528 / IAM 13628 / NBRC 14792 / USDA 110).